Reading from the N-terminus, the 75-residue chain is Large ribosomal subunit protein bL31 (75 aa).

Belongs to the bacterial ribosomal protein bL31 family. Type A subfamily. Part of the 50S ribosomal subunit.

Functionally, binds the 23S rRNA. The sequence is that of Large ribosomal subunit protein bL31 from Bradyrhizobium sp. (strain BTAi1 / ATCC BAA-1182).